A 509-amino-acid chain; its full sequence is 2-isopropylmalate synthase (509 aa).

A Pyruvate carboxyltransferase domain is found at 5 to 267 (IQIFDTTLRD…QTALNLEETK (263 aa)). Mn(2+) is bound by residues Asp14, His202, His204, and Asn238. Residues 391-509 (KLETLQLQYV…AAENVEKVGN (119 aa)) form a regulatory domain region.

It belongs to the alpha-IPM synthase/homocitrate synthase family. LeuA type 1 subfamily. In terms of assembly, homodimer. The cofactor is Mn(2+).

The protein localises to the cytoplasm. The catalysed reaction is 3-methyl-2-oxobutanoate + acetyl-CoA + H2O = (2S)-2-isopropylmalate + CoA + H(+). It functions in the pathway amino-acid biosynthesis; L-leucine biosynthesis; L-leucine from 3-methyl-2-oxobutanoate: step 1/4. In terms of biological role, catalyzes the condensation of the acetyl group of acetyl-CoA with 3-methyl-2-oxobutanoate (2-ketoisovalerate) to form 3-carboxy-3-hydroxy-4-methylpentanoate (2-isopropylmalate). This is 2-isopropylmalate synthase from Staphylococcus aureus (strain Mu3 / ATCC 700698).